A 301-amino-acid chain; its full sequence is Probable 5-dehydro-4-deoxyglucarate dehydratase (301 aa).

Belongs to the DapA family.

The enzyme catalyses 5-dehydro-4-deoxy-D-glucarate + H(+) = 2,5-dioxopentanoate + CO2 + H2O. The protein operates within carbohydrate acid metabolism; D-glucarate degradation; 2,5-dioxopentanoate from D-glucarate: step 2/2. The polypeptide is Probable 5-dehydro-4-deoxyglucarate dehydratase (Xanthobacter autotrophicus (strain ATCC BAA-1158 / Py2)).